The following is a 221-amino-acid chain: Probable N-acetyl-alpha-D-glucosaminyl L-malate deacetylase 2 (221 aa).

Residues His11, Asp14, and His125 each coordinate Zn(2+).

The protein belongs to the PIGL family. It depends on Zn(2+) as a cofactor.

It carries out the reaction (S)-malyl N-acetyl-alpha-D-glucosaminide + H2O = (S)-malyl alpha-D-glucosaminide + acetate. Its function is as follows. Involved in bacillithiol (BSH) biosynthesis. Catalyzes the second step of the pathway, the deacetylation of N-acetylglucosaminylmalate (GlcNAc-Mal) to glucosamine malate (GlcN-Mal). The polypeptide is Probable N-acetyl-alpha-D-glucosaminyl L-malate deacetylase 2 (Bacillus subtilis (strain 168)).